Reading from the N-terminus, the 658-residue chain is Endoplasmic reticulum mannosyl-oligosaccharide 1,2-alpha-mannosidase (658 aa).

Residues 1-50 (MYPPPAPPPAPHRDFISVTLSLGESYDNSKSRRRRSCWRKWKQLSRLQRN) lie on the Cytoplasmic side of the membrane. The helical; Signal-anchor for type II membrane protein transmembrane segment at 51-71 (VILFVLGFLILCGFLYSLHTA) threads the bilayer. Over 72–658 (DQWKALSGRP…AHPLPIWAPA (587 aa)) the chain is Lumenal. Ser102 is subject to Phosphoserine. Residues 123–142 (GPPHLQIRPPNTVSKDGMQD) are disordered. Catalysis depends on Glu289, which acts as the Proton donor. Asp422 is a catalytic residue. Cys486 and Cys515 are oxidised to a cystine. The Proton donor role is filled by Glu529. The active site involves Glu558. Thr647 contacts Ca(2+).

This sequence belongs to the glycosyl hydrolase 47 family. The cofactor is Ca(2+).

Its subcellular location is the endoplasmic reticulum membrane. The catalysed reaction is N(4)-(alpha-D-Man-(1-&gt;2)-alpha-D-Man-(1-&gt;2)-alpha-D-Man-(1-&gt;3)-[alpha-D-Man-(1-&gt;2)-alpha-D-Man-(1-&gt;3)-[alpha-D-Man-(1-&gt;2)-alpha-D-Man-(1-&gt;6)]-alpha-D-Man-(1-&gt;6)]-beta-D-Man-(1-&gt;4)-beta-D-GlcNAc-(1-&gt;4)-beta-D-GlcNAc)-L-asparaginyl-[protein] (N-glucan mannose isomer 9A1,2,3B1,2,3) + 4 H2O = N(4)-(alpha-D-Man-(1-&gt;3)-[alpha-D-Man-(1-&gt;3)-[alpha-D-Man-(1-&gt;6)]-alpha-D-Man-(1-&gt;6)]-beta-D-Man-(1-&gt;4)-beta-D-GlcNAc-(1-&gt;4)-beta-D-GlcNAc)-L-asparaginyl-[protein] (N-glucan mannose isomer 5A1,2) + 4 beta-D-mannose. The enzyme catalyses N(4)-(alpha-D-Man-(1-&gt;2)-alpha-D-Man-(1-&gt;2)-alpha-D-Man-(1-&gt;3)-[alpha-D-Man-(1-&gt;3)-[alpha-D-Man-(1-&gt;2)-alpha-D-Man-(1-&gt;6)]-alpha-D-Man-(1-&gt;6)]-beta-D-Man-(1-&gt;4)-beta-D-GlcNAc-(1-&gt;4)-beta-D-GlcNAc)-L-asparaginyl-[protein] (N-glucan mannose isomer 8A1,2,3B1,3) + 3 H2O = N(4)-(alpha-D-Man-(1-&gt;3)-[alpha-D-Man-(1-&gt;3)-[alpha-D-Man-(1-&gt;6)]-alpha-D-Man-(1-&gt;6)]-beta-D-Man-(1-&gt;4)-beta-D-GlcNAc-(1-&gt;4)-beta-D-GlcNAc)-L-asparaginyl-[protein] (N-glucan mannose isomer 5A1,2) + 3 beta-D-mannose. It functions in the pathway protein modification; protein glycosylation. In terms of biological role, involved in glycoprotein quality control targeting of misfolded glycoproteins for degradation. It primarily trims a single alpha-1,2-linked mannose residue from Man(9)GlcNAc(2) to produce Man(8)GlcNAc(2), but at high enzyme concentrations, as found in the ER quality control compartment (ERQC), it further trims the carbohydrates to Man(5-6)GlcNAc(2). This chain is Endoplasmic reticulum mannosyl-oligosaccharide 1,2-alpha-mannosidase (Man1b1), found in Mus musculus (Mouse).